A 191-amino-acid chain; its full sequence is Pyridoxal 5'-phosphate synthase subunit PdxT (191 aa).

52 to 54 (GES) is an L-glutamine binding site. Cys-81 serves as the catalytic Nucleophile. Residues Arg-108 and 136–137 (IR) each bind L-glutamine. Residues His-172 and Glu-174 each act as charge relay system in the active site.

This sequence belongs to the glutaminase PdxT/SNO family. As to quaternary structure, in the presence of PdxS, forms a dodecamer of heterodimers. Only shows activity in the heterodimer.

The enzyme catalyses aldehydo-D-ribose 5-phosphate + D-glyceraldehyde 3-phosphate + L-glutamine = pyridoxal 5'-phosphate + L-glutamate + phosphate + 3 H2O + H(+). It carries out the reaction L-glutamine + H2O = L-glutamate + NH4(+). It functions in the pathway cofactor biosynthesis; pyridoxal 5'-phosphate biosynthesis. Functionally, catalyzes the hydrolysis of glutamine to glutamate and ammonia as part of the biosynthesis of pyridoxal 5'-phosphate. The resulting ammonia molecule is channeled to the active site of PdxS. In Actinobacillus pleuropneumoniae serotype 7 (strain AP76), this protein is Pyridoxal 5'-phosphate synthase subunit PdxT.